Consider the following 408-residue polypeptide: Tryptophan synthase beta chain (408 aa).

Lysine 103 is subject to N6-(pyridoxal phosphate)lysine.

The protein belongs to the TrpB family. In terms of assembly, tetramer of two alpha and two beta chains. Pyridoxal 5'-phosphate is required as a cofactor.

It catalyses the reaction (1S,2R)-1-C-(indol-3-yl)glycerol 3-phosphate + L-serine = D-glyceraldehyde 3-phosphate + L-tryptophan + H2O. It participates in amino-acid biosynthesis; L-tryptophan biosynthesis; L-tryptophan from chorismate: step 5/5. The beta subunit is responsible for the synthesis of L-tryptophan from indole and L-serine. The polypeptide is Tryptophan synthase beta chain (Koribacter versatilis (strain Ellin345)).